The sequence spans 818 residues: Glycerol-3-phosphate acyltransferase (818 aa).

Residues 305 to 310 carry the HXXXXD motif motif; the sequence is HRSHMD.

This sequence belongs to the GPAT/DAPAT family.

It is found in the cell inner membrane. It carries out the reaction sn-glycerol 3-phosphate + an acyl-CoA = a 1-acyl-sn-glycero-3-phosphate + CoA. It participates in phospholipid metabolism; CDP-diacylglycerol biosynthesis; CDP-diacylglycerol from sn-glycerol 3-phosphate: step 1/3. This Photorhabdus laumondii subsp. laumondii (strain DSM 15139 / CIP 105565 / TT01) (Photorhabdus luminescens subsp. laumondii) protein is Glycerol-3-phosphate acyltransferase.